Consider the following 701-residue polypeptide: Glycine--tRNA ligase beta subunit (701 aa).

Belongs to the class-II aminoacyl-tRNA synthetase family. In terms of assembly, tetramer of two alpha and two beta subunits.

It is found in the cytoplasm. It catalyses the reaction tRNA(Gly) + glycine + ATP = glycyl-tRNA(Gly) + AMP + diphosphate. The polypeptide is Glycine--tRNA ligase beta subunit (Anaeromyxobacter dehalogenans (strain 2CP-C)).